Reading from the N-terminus, the 871-residue chain is DNA mismatch repair protein MutS (871 aa).

Residue Gly620 to Ser627 participates in ATP binding. A disordered region spans residues His806–Leu837.

This sequence belongs to the DNA mismatch repair MutS family.

Its function is as follows. This protein is involved in the repair of mismatches in DNA. It is possible that it carries out the mismatch recognition step. This protein has a weak ATPase activity. The polypeptide is DNA mismatch repair protein MutS (Idiomarina loihiensis (strain ATCC BAA-735 / DSM 15497 / L2-TR)).